Here is a 400-residue protein sequence, read N- to C-terminus: Signal recognition particle receptor FtsY (400 aa).

Disordered regions lie at residues 12–37 (TKKT…QEEQ) and 51–86 (NKIK…KDKK). Positions 51–72 (NKIKKTKTSETKKQEKPIETLK) are enriched in basic and acidic residues. Residues 192–199 (GVNGTGKT), 278–282 (DTAGR), and 342–345 (TKMD) contribute to the GTP site.

It belongs to the GTP-binding SRP family. FtsY subfamily. As to quaternary structure, part of the signal recognition particle protein translocation system, which is composed of SRP and FtsY.

The protein localises to the cell membrane. Its subcellular location is the cytoplasm. It catalyses the reaction GTP + H2O = GDP + phosphate + H(+). Its function is as follows. Involved in targeting and insertion of nascent membrane proteins into the cytoplasmic membrane. Acts as a receptor for the complex formed by the signal recognition particle (SRP) and the ribosome-nascent chain (RNC). This chain is Signal recognition particle receptor FtsY, found in Mycoplasma mycoides subsp. mycoides SC (strain CCUG 32753 / NCTC 10114 / PG1).